The primary structure comprises 87 residues: Small ribosomal subunit protein bS20 (87 aa).

It belongs to the bacterial ribosomal protein bS20 family.

Its function is as follows. Binds directly to 16S ribosomal RNA. This is Small ribosomal subunit protein bS20 from Clostridium botulinum (strain Alaska E43 / Type E3).